We begin with the raw amino-acid sequence, 794 residues long: Kinesin-like protein KIN-13A (794 aa).

The Kinesin motor domain occupies 193–526 (KIKVVVRKRP…LRYADRVKSL (334 aa)). Position 282–289 (282–289 (GQTGSGKT)) interacts with ATP. The disordered stretch occupies residues 525–699 (SLSKSGNSKK…YETASRQYET (175 aa)). Over residues 569–579 (ETRRRVVEKDS) the composition is skewed to basic and acidic residues. Composition is skewed to polar residues over residues 580–593 (NSST…QPTN) and 611–632 (EPNS…YPQE). Basic and acidic residues predominate over residues 650–668 (GLREEKPDRPQNWSKRDVS). Positions 669 to 696 (SSDIPTLTNFRQNASETASRQYETASRQ) are enriched in polar residues. Residues 705–742 (ENLDALLEEEEALIAAHRKEIEDTMEIVREEMKLLAEV) adopt a coiled-coil conformation.

The protein belongs to the TRAFAC class myosin-kinesin ATPase superfamily. Kinesin family. KIN-13 subfamily. Component of the active ARAC10-IRC5-KIN13A complex. Interacts (via-C-terminus) with ICR2 and ICR5 (via N-terminus). No interactions with ICR1. As to expression, expressed in leaves, roots, young and mature seedlings. Preferentially expressed in the secondary cell wall pits of differentiating metaxylem vessel cells (at the protein level).

It is found in the golgi apparatus. The protein resides in the golgi stack. Its subcellular location is the cytoplasm. It localises to the cytoskeleton. Functionally, internal motor kinesin involved in trichome morphogenesis. Participates in regulating the formation of Golgi-associated vesicles. Plays a central role in microtubule disassembly via the active ARAC10-ICR5 cascade, which establishes the secondary cell wall pattern in metaxylem vessel cells. Acts redundantly with KIN13B to modulate cell wall synthesis and cell expansion via the THE1 pathway. In Arabidopsis thaliana (Mouse-ear cress), this protein is Kinesin-like protein KIN-13A.